Reading from the N-terminus, the 82-residue chain is Acyl carrier protein (82 aa).

The Carrier domain maps to 3 to 81 (LSREKVLESI…DAVDFIIAAK (79 aa)). At serine 41 the chain carries O-(pantetheine 4'-phosphoryl)serine.

It belongs to the acyl carrier protein (ACP) family. In terms of processing, 4'-phosphopantetheine is transferred from CoA to a specific serine of apo-ACP by AcpS. This modification is essential for activity because fatty acids are bound in thioester linkage to the sulfhydryl of the prosthetic group.

It localises to the cytoplasm. Its pathway is lipid metabolism; fatty acid biosynthesis. Carrier of the growing fatty acid chain in fatty acid biosynthesis. The sequence is that of Acyl carrier protein from Tropheryma whipplei (strain Twist) (Whipple's bacillus).